Consider the following 89-residue polypeptide: Elongation factor 1-beta (89 aa).

It belongs to the EF-1-beta/EF-1-delta family.

Promotes the exchange of GDP for GTP in EF-1-alpha/GDP, thus allowing the regeneration of EF-1-alpha/GTP that could then be used to form the ternary complex EF-1-alpha/GTP/AAtRNA. In Methanococcoides burtonii (strain DSM 6242 / NBRC 107633 / OCM 468 / ACE-M), this protein is Elongation factor 1-beta.